A 518-amino-acid chain; its full sequence is Probable cyclic di-GMP phosphodiesterase PdeN (518 aa).

2 consecutive transmembrane segments (helical) span residues 16–36 (CIVA…LVAW) and 236–256 (VWYA…LCYY). Residues 261–514 (RMRPGREIMT…DFVRWLKKPY (254 aa)) form the EAL domain.

Its subcellular location is the cell inner membrane. It catalyses the reaction 3',3'-c-di-GMP + H2O = 5'-phosphoguanylyl(3'-&gt;5')guanosine + H(+). In terms of biological role, phosphodiesterase (PDE) that catalyzes the hydrolysis of cyclic-di-GMP (c-di-GMP) to 5'-pGpG. This is Probable cyclic di-GMP phosphodiesterase PdeN from Escherichia coli (strain K12).